The primary structure comprises 633 residues: Chaperone protein DnaK (633 aa).

The residue at position 198 (Thr-198) is a Phosphothreonine; by autocatalysis.

The protein belongs to the heat shock protein 70 family.

Acts as a chaperone. The polypeptide is Chaperone protein DnaK (Rhodopseudomonas palustris (strain BisA53)).